A 207-amino-acid chain; its full sequence is LexA repressor (207 aa).

The H-T-H motif DNA-binding region spans 28-48; that stretch reads RAEIARHLGFKSANAAEEHLK. Residues Ser-124 and Lys-161 each act as for autocatalytic cleavage activity in the active site.

The protein belongs to the peptidase S24 family. In terms of assembly, homodimer.

It carries out the reaction Hydrolysis of Ala-|-Gly bond in repressor LexA.. In terms of biological role, represses a number of genes involved in the response to DNA damage (SOS response), including recA and lexA. In the presence of single-stranded DNA, RecA interacts with LexA causing an autocatalytic cleavage which disrupts the DNA-binding part of LexA, leading to derepression of the SOS regulon and eventually DNA repair. In Pseudoalteromonas atlantica (strain T6c / ATCC BAA-1087), this protein is LexA repressor.